The following is a 211-amino-acid chain: Holliday junction resolvase RecU (211 aa).

Residues Thr95, Asp97, Glu110, and Gln129 each contribute to the Mg(2+) site.

Belongs to the RecU family. Mg(2+) is required as a cofactor.

It localises to the cytoplasm. The catalysed reaction is Endonucleolytic cleavage at a junction such as a reciprocal single-stranded crossover between two homologous DNA duplexes (Holliday junction).. Functionally, endonuclease that resolves Holliday junction intermediates in genetic recombination. Cleaves mobile four-strand junctions by introducing symmetrical nicks in paired strands. Promotes annealing of linear ssDNA with homologous dsDNA. Required for DNA repair, homologous recombination and chromosome segregation. In Lactobacillus acidophilus (strain ATCC 700396 / NCK56 / N2 / NCFM), this protein is Holliday junction resolvase RecU.